A 290-amino-acid chain; its full sequence is Probable septum site-determining protein MinC (290 aa).

Belongs to the MinC family. As to quaternary structure, interacts with MinD and FtsZ.

Functionally, cell division inhibitor that blocks the formation of polar Z ring septums. Rapidly oscillates between the poles of the cell to destabilize FtsZ filaments that have formed before they mature into polar Z rings. Prevents FtsZ polymerization. The chain is Probable septum site-determining protein MinC from Heliobacterium modesticaldum (strain ATCC 51547 / Ice1).